Reading from the N-terminus, the 135-residue chain is Large ribosomal subunit protein uL18 (135 aa).

The tract at residues 1-23 is disordered; the sequence is MSQTANQKAKRIPLGKDASTKRR.

This sequence belongs to the universal ribosomal protein uL18 family. As to quaternary structure, part of the 50S ribosomal subunit; part of the 5S rRNA/L5/L18/L25 subcomplex. Contacts the 5S and 23S rRNAs.

Its function is as follows. This is one of the proteins that bind and probably mediate the attachment of the 5S RNA into the large ribosomal subunit, where it forms part of the central protuberance. The protein is Large ribosomal subunit protein uL18 of Rhodococcus jostii (strain RHA1).